The chain runs to 388 residues: Chalcone synthase DIV (388 aa).

The active site involves C164.

Belongs to the thiolase-like superfamily. Chalcone/stilbene synthases family.

It carries out the reaction (E)-4-coumaroyl-CoA + 3 malonyl-CoA + 3 H(+) = 2',4,4',6'-tetrahydroxychalcone + 3 CO2 + 4 CoA. It participates in secondary metabolite biosynthesis; flavonoid biosynthesis. In terms of biological role, the primary product of this enzyme is 4,2',4',6'-tetrahydroxychalcone (also termed naringenin-chalcone or chalcone) which can under specific conditions spontaneously isomerize into naringenin. The polypeptide is Chalcone synthase DIV (CHS-DIV) (Ipomoea batatas (Sweet potato)).